A 296-amino-acid polypeptide reads, in one-letter code: Haloalkane dehalogenase (296 aa).

Positions 31 to 155 (PILFQHGNPT…QDRDLFQAFR (125 aa)) constitute an AB hydrolase-1 domain. The active-site Nucleophile is the Asp-108. The active-site Proton donor is the Glu-132. His-272 serves as the catalytic Proton acceptor.

This sequence belongs to the haloalkane dehalogenase family. Type 2 subfamily. In terms of assembly, monomer.

The protein localises to the periplasm. It catalyses the reaction 1-haloalkane + H2O = a halide anion + a primary alcohol + H(+). The enzyme catalyses (3R,6R)-1,3,4,6-tetrachlorocyclohexa-1,4-diene + 2 H2O = 2,5-dichlorocyclohexa-2,5-dien-1,4-diol + 2 chloride + 2 H(+). It participates in xenobiotic degradation; gamma-hexachlorocyclohexane degradation. Catalyzes hydrolytic cleavage of carbon-halogen bonds in halogenated aliphatic compounds, leading to the formation of the corresponding primary alcohols, halide ions and protons. Is involved in the degradation of the important environmental pollutant gamma-hexachlorocyclohexane (gamma-HCH or lindane) as it also catalyzes conversion of 1,3,4,6-tetrachloro-1,4-cyclohexadiene (1,4-TCDN) to 2,5-dichloro-2,5-cyclohexadiene-1,4-diol (2,5-DDOL) via the intermediate 2,4,5-trichloro-2,5-cyclohexadiene-1-ol (2,4,5-DNOL). The protein is Haloalkane dehalogenase of Sphingobium indicum (strain DSM 16412 / CCM 7286 / MTCC 6364 / B90A).